Consider the following 439-residue polypeptide: Amino-acid acetyltransferase (439 aa).

Positions 289-429 constitute an N-acetyltransferase domain; sequence EDIRIATVQD…DHYNYQRRSK (141 aa).

The protein belongs to the acetyltransferase family. ArgA subfamily.

The protein resides in the cytoplasm. It catalyses the reaction L-glutamate + acetyl-CoA = N-acetyl-L-glutamate + CoA + H(+). The protein operates within amino-acid biosynthesis; L-arginine biosynthesis; N(2)-acetyl-L-ornithine from L-glutamate: step 1/4. In Mannheimia succiniciproducens (strain KCTC 0769BP / MBEL55E), this protein is Amino-acid acetyltransferase.